Consider the following 438-residue polypeptide: ATP-dependent RNA helicase SUB2 (438 aa).

The span at 1 to 19 (MSHEGEEDLLEYSDNEQEI) shows a compositional bias: acidic residues. The disordered stretch occupies residues 1-44 (MSHEGEEDLLEYSDNEQEIQVDNTKATEVAGNGEEAADGKDGDK). The short motif at 54 to 82 (TGFKDFLLKPELSRAIIDCGFEHPSEVQQ) is the Q motif element. The Helicase ATP-binding domain maps to 85–260 (IPQSIHGTDV…RRFLQNPLEI (176 aa)). 98–105 (AKSGLGKT) contacts ATP. A DECD box motif is present at residues 207-210 (DECD). A Helicase C-terminal domain is found at 272-433 (GLQQYYIRLE…EFPEEGVDPS (162 aa)).

It belongs to the DEAD box helicase family. DECD subfamily.

Its subcellular location is the nucleus. The catalysed reaction is ATP + H2O = ADP + phosphate + H(+). ATP-binding RNA helicase involved in transcription elongation and required for the export of mRNA out of the nucleus. SUB2 also plays a role in pre-mRNA splicing and spliceosome assembly. May be involved in rDNA and telomeric silencing, and maintenance of genome integrity. This chain is ATP-dependent RNA helicase SUB2 (SUB2), found in Eremothecium gossypii (strain ATCC 10895 / CBS 109.51 / FGSC 9923 / NRRL Y-1056) (Yeast).